The chain runs to 642 residues: Myrosinase-binding protein 2 (642 aa).

Jacalin-type lectin domains lie at 2 to 151, 156 to 291, 334 to 477, and 490 to 633; these read SEKV…HFFA, LKHF…HFAP, PNKV…YFAP, and SKKL…HAVP. Residues 296 to 334 are compositionally biased toward pro residues; the sequence is TPAPAPAPAPAPAPAPSPAPASAPVPAPAPTPAPAPAPP. Disordered regions lie at residues 296–338 and 479–499; these read TPAP…NKVE and TNSTTPSTPSTSKKLQARGGN. Residues 479-490 show a composition bias toward low complexity; that stretch reads TNSTTPSTPSTS.

This sequence belongs to the jacalin lectin family. Expressed in flowers. Detected mainly in ovules and styles of immature flowers, but also in pistils, styles, stamens, petals and embryos. Not detected in leaves.

This Arabidopsis thaliana (Mouse-ear cress) protein is Myrosinase-binding protein 2 (F-ATMBP).